Here is an 835-residue protein sequence, read N- to C-terminus: Leucine--tRNA ligase (835 aa).

The 'HIGH' region signature appears at 42-52; it reads PYPSGRIHMGH. The 'KMSKS' region motif lies at 612–616; the sequence is KMSKS. Lysine 615 contacts ATP.

Belongs to the class-I aminoacyl-tRNA synthetase family.

The protein localises to the cytoplasm. It catalyses the reaction tRNA(Leu) + L-leucine + ATP = L-leucyl-tRNA(Leu) + AMP + diphosphate. This Rhizorhabdus wittichii (strain DSM 6014 / CCUG 31198 / JCM 15750 / NBRC 105917 / EY 4224 / RW1) (Sphingomonas wittichii) protein is Leucine--tRNA ligase.